Reading from the N-terminus, the 347-residue chain is Phosphate acyltransferase (347 aa).

This sequence belongs to the PlsX family. In terms of assembly, homodimer. Probably interacts with PlsY.

The protein resides in the cytoplasm. It catalyses the reaction a fatty acyl-[ACP] + phosphate = an acyl phosphate + holo-[ACP]. It participates in lipid metabolism; phospholipid metabolism. Catalyzes the reversible formation of acyl-phosphate (acyl-PO(4)) from acyl-[acyl-carrier-protein] (acyl-ACP). This enzyme utilizes acyl-ACP as fatty acyl donor, but not acyl-CoA. This Syntrophotalea carbinolica (strain DSM 2380 / NBRC 103641 / GraBd1) (Pelobacter carbinolicus) protein is Phosphate acyltransferase.